We begin with the raw amino-acid sequence, 643 residues long: Very long-chain fatty acid transport protein (643 aa).

Residues M1–E15 are Cytoplasmic-facing. A helical transmembrane segment spans residues L16–A36. Residues Y37–H138 lie on the Extracellular side of the membrane. Residues L139–L159 traverse the membrane as a helical segment. Over T160–S249 the chain is Cytoplasmic. Y235–V246 contacts ATP. The stretch at T250 to A318 is an intramembrane region. The Cytoplasmic portion of the chain corresponds to N319–L643. The short motif at D477–Q525 is the FACS element.

Belongs to the ATP-dependent AMP-binding enzyme family.

It is found in the lipid droplet. It localises to the cell membrane. The protein localises to the peroxisome membrane. The protein resides in the peroxisome. It catalyses the reaction a very long-chain fatty acid + ATP + CoA = a very long-chain fatty acyl-CoA + AMP + diphosphate. Its function is as follows. Acyl-CoA synthetase required for both the import of long chain fatty acids (LCFAs) (C14-C18) and the activation very long chain fatty acids (VLCFAs) (C20-C26) by esterification of the fatty acids into metabolically active CoA-thioesters for subsequent degradation or incorporation into phospholipids. The transport and fatty acyl-CoA synthetase activities are genetically separable and are thus independent activities. Esterifies VLCFAs in the peroxisome matrix. The VLCFAs are actively transported into peroxisomes by a PXA1-PXA2 heterodimeric transporter in the peroxisomal membrane. The sequence is that of Very long-chain fatty acid transport protein (FAT1) from Cochliobolus heterostrophus (Southern corn leaf blight fungus).